The chain runs to 1159 residues: WASH complex subunit 5 (1159 aa).

Ser-917 bears the Phosphoserine mark.

The protein belongs to the strumpellin family. As to quaternary structure, component of the WASH core complex also described as WASH regulatory complex (SHRC) composed of WASH (WASHC1, WASH2P or WASH3P), WASHC2 (WASHC2A or WASHC2C), WASHC3, WASHC4 and WASHC5. The WASH core complex associates via WASHC2 with the F-actin-capping protein dimer (formed by CAPZA1, CAPZA2 or CAPZA3 and CAPZB) in a transient or substoichiometric manner which was initially described as WASH complex. Interacts with VCP, PI4K2A. As to expression, expressed ubiquitously.

The protein localises to the cytoplasm. Its subcellular location is the cytosol. It localises to the endoplasmic reticulum. It is found in the early endosome. Acts as a component of the WASH core complex that functions as a nucleation-promoting factor (NPF) at the surface of endosomes, where it recruits and activates the Arp2/3 complex to induce actin polymerization, playing a key role in the fission of tubules that serve as transport intermediates during endosome sorting. May be involved in axonal outgrowth. Involved in cellular localization of ADRB2. Involved in cellular trafficking of BLOC-1 complex cargos such as ATP7A and VAMP7. This chain is WASH complex subunit 5, found in Homo sapiens (Human).